We begin with the raw amino-acid sequence, 82 residues long: Putative defensin-like protein 134 (82 aa).

Positions 1–26 (MEVRSLNLCFLLVLVLLMSPAPTAVA) are cleaved as a signal peptide. Cystine bridges form between C32-C79, C42-C68, C47-C74, and C51-C76.

Belongs to the DEFL family.

It is found in the secreted. This Arabidopsis thaliana (Mouse-ear cress) protein is Putative defensin-like protein 134.